We begin with the raw amino-acid sequence, 1255 residues long: TBC1 domain family member 1 (1255 aa).

Ser146 carries the post-translational modification Phosphoserine. Residues 208-228 form a disordered region; the sequence is RTDWEAPTGQPSAPGPRPMRK. Ser229 bears the Phosphoserine; by PKB/AKT1 mark. Ser231 carries the phosphoserine; by AMPK modification. In terms of domain architecture, PID spans 238-398; sequence LAFRKEFQDA…LHKLCERIEG (161 aa). Ser489 is subject to Phosphoserine; by PKB/AKT1. Phosphoserine is present on Ser497. A Phosphothreonine; by PKB/AKT1 modification is found at Thr499. Phosphoserine occurs at positions 501, 519, 521, 559, 560, 564, 565, and 579. Disordered stretches follow at residues 509-544 and 559-581; these read GNKA…MGDK and SSDD…LSPQ. Positions 519–539 are enriched in low complexity; sequence SASVDLDSSTSSTLSNTSKEL. Phosphothreonine is present on Thr590. Disordered regions lie at residues 595 to 614 and 621 to 681; these read PVEC…VSQR and SVST…GNAV. Ser608 is subject to Phosphoserine. At Ser621 the chain carries Phosphoserine; by PKB/AKT1. 2 positions are modified to phosphoserine: Ser660 and Ser661. Positions 670–679 are enriched in polar residues; that stretch reads HNSSGEQSGN. Ser697 is modified (phosphoserine; by PKB/AKT1). Phosphoserine occurs at positions 698 and 699. Ser700 is subject to Phosphoserine; by AMPK. Positions 764-786 are disordered; that stretch reads DSPSRYEDYSELGELPPRSPLEP. Ser782 and Ser1028 each carry phosphoserine. The Rab-GAP TBC domain maps to 887–1081; sequence GVPRHHRGEI…RVFDMIFLQG (195 aa). A Phosphotyrosine modification is found at Tyr1039. Thr1218 carries the post-translational modification Phosphothreonine. The tract at residues 1233–1255 is disordered; it reads LRRQSARPSTPEPDCTQLEPTGD.

Interacts with APPL2 (via BAR domain); interaction is dependent of TBC1D1 phosphorylation at Ser-229; interaction diminishes the phosphorylation of TBC1D1 at Thr-590, resulting in inhibition of SLC2A4/GLUT4 translocation and glucose uptake. In terms of processing, insulin-stimulated phosphorylation by AKT family kinases stimulates SLC2A4/GLUT4 translocation. In terms of tissue distribution, expressed in highest levels in hematopoietic cells, testis and kidney.

Its subcellular location is the nucleus. May act as a GTPase-activating protein for Rab family protein(s). May play a role in the cell cycle and differentiation of various tissues. Involved in the trafficking and translocation of GLUT4-containing vesicles and insulin-stimulated glucose uptake into cells. The sequence is that of TBC1 domain family member 1 (Tbc1d1) from Mus musculus (Mouse).